Reading from the N-terminus, the 316-residue chain is Ribosomal RNA small subunit methyltransferase H (316 aa).

S-adenosyl-L-methionine contacts are provided by residues 42 to 44 (GGH), Asp-62, Phe-86, Asp-104, and Gln-111.

The protein belongs to the methyltransferase superfamily. RsmH family.

Its subcellular location is the cytoplasm. The enzyme catalyses cytidine(1402) in 16S rRNA + S-adenosyl-L-methionine = N(4)-methylcytidine(1402) in 16S rRNA + S-adenosyl-L-homocysteine + H(+). Its function is as follows. Specifically methylates the N4 position of cytidine in position 1402 (C1402) of 16S rRNA. The protein is Ribosomal RNA small subunit methyltransferase H of Polynucleobacter asymbioticus (strain DSM 18221 / CIP 109841 / QLW-P1DMWA-1) (Polynucleobacter necessarius subsp. asymbioticus).